The sequence spans 160 residues: uncharacterized protein (160 aa).

The RING-type zinc finger occupies 8–46 (CAVCLDFFVEPCIIECGHSYCRFCIESHLNINEKCPLCR).

This is an uncharacterized protein from Caenorhabditis elegans.